Consider the following 1357-residue polypeptide: Ubiquitin carboxyl-terminal hydrolase 19 (1357 aa).

3 disordered regions span residues 1 to 52 (MSAG…PTKD), 162 to 239 (LSPI…SDSA), and 275 to 296 (VSPR…EKDD). Over 1–1330 (MSAGTSATGP…TTSDEGCLRY (1330 aa)) the chain is Cytoplasmic. 2 stretches are compositionally biased toward basic and acidic residues: residues 28-52 (DRAN…PTKD) and 171-182 (SEPRRAKQEARN). The CS 1 domain maps to 51-140 (KDELLLDWRQ…VPLLTWPSLL (90 aa)). Over residues 194–206 (SGASPGAQAGPSA) the composition is skewed to low complexity. A phosphoserine mark is found at serine 221 and serine 283. Residues 321–423 (LAFVKNDSYE…RQSQRWGGLE (103 aa)) enclose the CS 2 domain. A disordered region spans residues 432–479 (AKVAVPTGPTPLDSTPPGGGPLPLTGQEEARAVEKEKPKARSEDSGLD). Over residues 437–457 (PTGPTPLDSTPPGGGPLPLTG) the composition is skewed to low complexity. Residues 459 to 475 (EEARAVEKEKPKARSED) show a composition bias toward basic and acidic residues. One can recognise a USP domain in the interval 536–1253 (TGLVNLGNTC…YAYVLFYRRR (718 aa)). Residue cysteine 545 is the Nucleophile of the active site. The Zn(2+) site is built by cysteine 830, cysteine 833, cysteine 847, cysteine 850, cysteine 856, cysteine 860, histidine 868, and cysteine 872. The MYND-type zinc finger occupies 830-872 (CAACQRKQQSEDEKLKRCTRCYRVGYCNQFCQKTHWPDHKGLC). Residues 962-981 (DTGAHRMWPPADRGPVPSTS) are disordered. Histidine 1204 functions as the Proton acceptor in the catalytic mechanism. A compositionally biased stretch (basic and acidic residues) spans 1259 to 1271 (RPPRAAHAEHHPD). Disordered stretches follow at residues 1259–1278 (RPPR…AAEA) and 1292–1320 (AEEE…PRGP). The helical transmembrane segment at 1331 to 1351 (FVLGTVAALVALVLNVFYPLV) threads the bilayer. Residues 1352 to 1357 (SQSRWR) are Lumenal-facing.

Interacts with RNF123. Interacts with BIRC2/c-IAP1, BIRC3/c-IAP2 and XIAP/BIRC4. Interacts with HIF1A (via N-terminus). Expressed in testis, heart, kidney and skeletal muscle. Low levels of expression are detectable in all other tissues screened.

It localises to the endoplasmic reticulum membrane. It carries out the reaction Thiol-dependent hydrolysis of ester, thioester, amide, peptide and isopeptide bonds formed by the C-terminal Gly of ubiquitin (a 76-residue protein attached to proteins as an intracellular targeting signal).. In terms of biological role, deubiquitinating enzyme that regulates the degradation of various proteins by removing ubiquitin moieties, thereby preventing their proteasomal degradation. Stabilizes RNF123, which promotes CDKN1B degradation and contributes to cell proliferation. Decreases the levels of ubiquitinated proteins during skeletal muscle formation and acts to repress myogenesis. Modulates transcription of major myofibrillar proteins. Also involved in turnover of endoplasmic-reticulum-associated degradation (ERAD) substrates. Mechanistically, deubiquitinates and thereby stabilizes several E3 ligases involved in the ERAD pathway including SYVN1 or MARCHF6. Regulates the stability of other E3 ligases including BIRC2/c-IAP1 and BIRC3/c-IAP2 by preventing their ubiquitination. Required for cells to mount an appropriate response to hypoxia by rescuing HIF1A from degradation in a non-catalytic manner and by mediating the deubiquitination of FUNDC1. Attenuates mitochondrial damage and ferroptosis by targeting and stabilizing NADPH oxidase 4/NOX4. Negatively regulates TNF-alpha- and IL-1beta-triggered NF-kappa-B activation by hydrolyzing 'Lys-27'- and 'Lys-63'-linked polyubiquitin chains from MAP3K7. Modulates also the protein level and aggregation of polyQ-expanded huntingtin/HTT through HSP90AA1. This Rattus norvegicus (Rat) protein is Ubiquitin carboxyl-terminal hydrolase 19 (Usp19).